The following is a 99-amino-acid chain: Plastocyanin (99 aa).

The Plastocyanin-like domain occupies 1-99; that stretch reads VEILLGGEDG…AGMVGKVTVN (99 aa). Cu cation is bound by residues His37, Cys84, His87, and Met92.

This sequence belongs to the plastocyanin family. Requires Cu(2+) as cofactor.

It localises to the plastid. Its subcellular location is the chloroplast thylakoid membrane. In terms of biological role, participates in electron transfer between P700 and the cytochrome b6-f complex in photosystem I. The sequence is that of Plastocyanin (PETE) from Sambucus nigra (European elder).